The primary structure comprises 865 residues: Protein translocase subunit SecA (865 aa).

ATP is bound by residues glutamine 93, 111–115 (GEGKT), and aspartate 501. Positions 841, 843, 852, and 853 each coordinate Zn(2+).

Belongs to the SecA family. Monomer and homodimer. Part of the essential Sec protein translocation apparatus which comprises SecA, SecYEG and auxiliary proteins SecDF-YajC and YidC. Requires Zn(2+) as cofactor.

It localises to the cell inner membrane. The protein resides in the cytoplasm. The catalysed reaction is ATP + H2O + cellular proteinSide 1 = ADP + phosphate + cellular proteinSide 2.. Functionally, part of the Sec protein translocase complex. Interacts with the SecYEG preprotein conducting channel. Has a central role in coupling the hydrolysis of ATP to the transfer of proteins into and across the cell membrane, serving as an ATP-driven molecular motor driving the stepwise translocation of polypeptide chains across the membrane. This Helicobacter pylori (strain G27) protein is Protein translocase subunit SecA.